Consider the following 267-residue polypeptide: Indole-3-glycerol phosphate synthase (267 aa).

This sequence belongs to the TrpC family.

The catalysed reaction is 1-(2-carboxyphenylamino)-1-deoxy-D-ribulose 5-phosphate + H(+) = (1S,2R)-1-C-(indol-3-yl)glycerol 3-phosphate + CO2 + H2O. Its pathway is amino-acid biosynthesis; L-tryptophan biosynthesis; L-tryptophan from chorismate: step 4/5. The chain is Indole-3-glycerol phosphate synthase from Polynucleobacter necessarius subsp. necessarius (strain STIR1).